A 481-amino-acid chain; its full sequence is Amino acid permease 6 (481 aa).

Residues 1 to 36 (MEKKKSMFVEQSFPEHEIGDTNKNFDEDGRDKRTGT) lie on the Cytoplasmic side of the membrane. The next 2 membrane-spanning stretches (helical) occupy residues 37-57 (WMTGSAHIITAVIGSGVLSLA) and 58-78 (WAIAQLGWVAGPAVLMAFSFI). Residues 79-125 (TYFTSTMLADCYRSPDPVTGKRNYTYMEVVRSYLGGRKVQLCGLAQY) lie on the Cytoplasmic side of the membrane. A helical transmembrane segment spans residues 126-146 (GNLIGITIGYTITASISMVAV). At 147 to 167 (KRSNCFHKNGHNVKCATSNTP) the chain is on the extracellular side. The chain crosses the membrane as a helical span at residues 168-188 (FMIIFAIIQIILSQIPNFHNL). The Cytoplasmic portion of the chain corresponds to 189–190 (SW). Residues 191-211 (LSILAAVMSFCYASIGVGLSI) traverse the membrane as a helical segment. The Extracellular portion of the chain corresponds to 212–242 (AKAAGGGEHVRTTLTGVTVGIDVSGAEKIWR). Residues 243–263 (TFQAIGDIAFAYAYSTVLIEI) form a helical membrane-spanning segment. Topologically, residues 264–283 (QDTLKAGPPSENKAMKRASL) are cytoplasmic. The chain crosses the membrane as a helical span at residues 284-304 (VGVSTTTFFYMLCGCVGYAAF). Residues 305–321 (GNDAPGNFLTGFGFYEP) are Extracellular-facing. Residues 322-342 (FWLIDFANVCIAVHLIGAYQV) form a helical membrane-spanning segment. Residues 343–385 (FCQPIFQFVESQSAKRWPDNKFITGEYKIHVPCCGDFSINFLR) lie on the Cytoplasmic side of the membrane. Residues 386 to 405 (LVWRTSYVVVTAVVAMIFPF) traverse the membrane as a helical segment. At 406–408 (FND) the chain is on the extracellular side. Residues 409 to 427 (FLGLIGAASFWPLTVYFPI) form a helical membrane-spanning segment. Residues 428 to 447 (EMHIAQKKIPKFSFTWTWLK) are Cytoplasmic-facing. Residues 448–468 (ILSWTCFIVSLVAAAGSVQGL) form a helical membrane-spanning segment. Over 469–481 (IQSLKDFKPFQAP) the chain is Extracellular.

This sequence belongs to the amino acid/polyamine transporter 2 family. Amino acid/auxin permease (AAAP) (TC 2.A.18.2) subfamily. Expressed in roots and leaves, and at lower levels in stems and flowers. Found in the xylem parenchyma.

Its subcellular location is the cell membrane. In terms of biological role, amino acid-proton symporter. Stereospecific transporter with a broad specificity for tryptophan, proline, and neutral and acidic amino acids. Has an affinity for aspartate in a physiological range. Involved in the uptake of amino acids diffusing out of the xylem tracheids into the xylem parenchyma. This is Amino acid permease 6 (AAP6) from Arabidopsis thaliana (Mouse-ear cress).